Consider the following 446-residue polypeptide: Tubulin gamma chain (446 aa).

A GTP-binding site is contributed by 142–148; the sequence is AGGTGSG.

It belongs to the tubulin family.

Its subcellular location is the cytoplasm. The protein localises to the cytoskeleton. It localises to the microtubule organizing center. It is found in the spindle pole body. Its function is as follows. Tubulin is the major constituent of microtubules. The gamma chain is found at microtubule organizing centers (MTOC) such as the spindle poles or the centrosome, suggesting that it is involved in the minus-end nucleation of microtubule assembly. This chain is Tubulin gamma chain (tug1), found in Schizosaccharomyces japonicus (Fission yeast).